Here is a 123-residue protein sequence, read N- to C-terminus: Protein Wnt-3a (123 aa).

Serine 1 is lipidated: O-palmitoleoyl serine. Cysteine 89 and cysteine 104 are oxidised to a cystine. Asparagine 90 is a glycosylation site (N-linked (GlcNAc...) asparagine).

This sequence belongs to the Wnt family. Disulfide bonds have critical and distinct roles in secretion and activity. Loss of each conserved cysteine results in high molecular weight oxidized Wnt oligomers, which are formed through inter-Wnt disulfide bonding. Post-translationally, palmitoleoylation is required for efficient binding to frizzled receptors. Depalmitoleoylation leads to Wnt signaling pathway inhibition.

The protein resides in the secreted. It localises to the extracellular space. It is found in the extracellular matrix. In terms of biological role, ligand for members of the frizzled family of seven transmembrane receptors. Functions in the canonical Wnt signaling pathway that results in activation of transcription factors of the TCF/LEF family. Required for normal embryonic mesoderm development and formation of caudal somites. Required for normal morphogenesis of the developing neural tube. This Alopias vulpinus (Common thresher shark) protein is Protein Wnt-3a (WNT-3A).